We begin with the raw amino-acid sequence, 546 residues long: (+)-epi-alpha-bisabolol synthase (546 aa).

Mg(2+) is bound by residues D297, D301, D441, T445, and E449. Residues 297–301 (DDIYD) carry the DDXXD motif motif.

This sequence belongs to the terpene synthase family. Mg(2+) is required as a cofactor.

It carries out the reaction (2E,6E)-farnesyl diphosphate + H2O = (+)-epi-alpha-bisabolol + diphosphate. Its pathway is secondary metabolite biosynthesis; terpenoid biosynthesis. Its function is as follows. Sesquiterpene synthase involved in the biosynthesis of (+)-epi-alpha-bisabolol, a precursor of the natural sweetner hernandulcin. The chain is (+)-epi-alpha-bisabolol synthase from Phyla dulcis (Aztec sweet herb).